A 202-amino-acid chain; its full sequence is dTTP/UTP pyrophosphatase (202 aa).

The active-site Proton acceptor is D80.

Belongs to the Maf family. YhdE subfamily. A divalent metal cation serves as cofactor.

The protein localises to the cytoplasm. It catalyses the reaction dTTP + H2O = dTMP + diphosphate + H(+). The enzyme catalyses UTP + H2O = UMP + diphosphate + H(+). In terms of biological role, nucleoside triphosphate pyrophosphatase that hydrolyzes dTTP and UTP. May have a dual role in cell division arrest and in preventing the incorporation of modified nucleotides into cellular nucleic acids. The polypeptide is dTTP/UTP pyrophosphatase (Alkalilimnicola ehrlichii (strain ATCC BAA-1101 / DSM 17681 / MLHE-1)).